Reading from the N-terminus, the 360-residue chain is Phospho-N-acetylmuramoyl-pentapeptide-transferase (360 aa).

10 helical membrane-spanning segments follow: residues 27-47, 71-91, 93-113, 128-148, 168-188, 199-219, 239-259, 262-282, 288-308, and 337-357; these read GAMI…INSL, TPTM…LLWA, LASV…AIGF, FSGK…AFTI, LVIN…VGAG, GLAI…AYLS, LAVV…FNAP, AIFM…TVAV, IVLA…IIQV, and QVVI…LSTL.

This sequence belongs to the glycosyltransferase 4 family. MraY subfamily. The cofactor is Mg(2+).

Its subcellular location is the cell inner membrane. It carries out the reaction UDP-N-acetyl-alpha-D-muramoyl-L-alanyl-gamma-D-glutamyl-meso-2,6-diaminopimeloyl-D-alanyl-D-alanine + di-trans,octa-cis-undecaprenyl phosphate = di-trans,octa-cis-undecaprenyl diphospho-N-acetyl-alpha-D-muramoyl-L-alanyl-D-glutamyl-meso-2,6-diaminopimeloyl-D-alanyl-D-alanine + UMP. The protein operates within cell wall biogenesis; peptidoglycan biosynthesis. Its function is as follows. Catalyzes the initial step of the lipid cycle reactions in the biosynthesis of the cell wall peptidoglycan: transfers peptidoglycan precursor phospho-MurNAc-pentapeptide from UDP-MurNAc-pentapeptide onto the lipid carrier undecaprenyl phosphate, yielding undecaprenyl-pyrophosphoryl-MurNAc-pentapeptide, known as lipid I. This Brucella ovis (strain ATCC 25840 / 63/290 / NCTC 10512) protein is Phospho-N-acetylmuramoyl-pentapeptide-transferase.